The primary structure comprises 96 residues: Probable quinol oxidase subunit 4 (96 aa).

The next 3 helical transmembrane spans lie at 8–28 (TVGFIASIVLTILAVFVTLYT), 36–56 (ITIIFGFAFIQAAVQLLMFMH), and 68–88 (FKVLFAIIITLITVIGTYWVM).

Belongs to the cytochrome c oxidase bacterial subunit 4 family.

It is found in the cell membrane. The catalysed reaction is 2 a quinol + O2 = 2 a quinone + 2 H2O. Functionally, catalyzes quinol oxidation with the concomitant reduction of oxygen to water. In Staphylococcus saprophyticus subsp. saprophyticus (strain ATCC 15305 / DSM 20229 / NCIMB 8711 / NCTC 7292 / S-41), this protein is Probable quinol oxidase subunit 4 (qoxD).